The sequence spans 85 residues: uncharacterized protein (85 aa).

This sequence belongs to the ycf76 family.

The protein resides in the plastid. It localises to the chloroplast. This is an uncharacterized protein from Oryza sativa subsp. japonica (Rice).